The chain runs to 124 residues: Small ribosomal subunit protein uS12 (124 aa).

A 3-methylthioaspartic acid modification is found at Asp89.

Belongs to the universal ribosomal protein uS12 family. As to quaternary structure, part of the 30S ribosomal subunit. Contacts proteins S8 and S17. May interact with IF1 in the 30S initiation complex.

Its function is as follows. With S4 and S5 plays an important role in translational accuracy. Functionally, interacts with and stabilizes bases of the 16S rRNA that are involved in tRNA selection in the A site and with the mRNA backbone. Located at the interface of the 30S and 50S subunits, it traverses the body of the 30S subunit contacting proteins on the other side and probably holding the rRNA structure together. The combined cluster of proteins S8, S12 and S17 appears to hold together the shoulder and platform of the 30S subunit. The polypeptide is Small ribosomal subunit protein uS12 (Aeromonas hydrophila subsp. hydrophila (strain ATCC 7966 / DSM 30187 / BCRC 13018 / CCUG 14551 / JCM 1027 / KCTC 2358 / NCIMB 9240 / NCTC 8049)).